Consider the following 136-residue polypeptide: Small ribosomal subunit protein uS9 (136 aa).

Belongs to the universal ribosomal protein uS9 family.

This is Small ribosomal subunit protein uS9 from Borrelia hermsii (strain HS1 / DAH).